We begin with the raw amino-acid sequence, 620 residues long: Translation initiation factor IF-2 (620 aa).

The 170-residue stretch at 119 to 288 (ERPPIVTIMG…IILISELENL (170 aa)) folds into the tr-type G domain. A G1 region spans residues 128–135 (GHVDHGKT). GTP is bound at residue 128 to 135 (GHVDHGKT). A G2 region spans residues 153 to 157 (GITQA). Positions 175–178 (DTPG) are G3. Residues 175–179 (DTPGH) and 229–232 (NKID) each bind GTP. The tract at residues 229–232 (NKID) is G4. Residues 265 to 267 (SAI) form a G5 region.

The protein belongs to the TRAFAC class translation factor GTPase superfamily. Classic translation factor GTPase family. IF-2 subfamily.

The protein localises to the cytoplasm. In terms of biological role, one of the essential components for the initiation of protein synthesis. Protects formylmethionyl-tRNA from spontaneous hydrolysis and promotes its binding to the 30S ribosomal subunits. Also involved in the hydrolysis of GTP during the formation of the 70S ribosomal complex. The protein is Translation initiation factor IF-2 of Mycoplasma mycoides subsp. mycoides SC (strain CCUG 32753 / NCTC 10114 / PG1).